The chain runs to 20 residues: Non-specific lipid-transfer protein (20 aa).

This sequence belongs to the plant LTP family.

In terms of biological role, plant non-specific lipid-transfer proteins transfer phospholipids as well as galactolipids across membranes. May play a role in wax or cutin deposition in the cell walls of expanding epidermal cells and certain secretory tissues. In Citrus sinensis (Sweet orange), this protein is Non-specific lipid-transfer protein.